The primary structure comprises 157 residues: Phosphopantetheine adenylyltransferase (157 aa).

Position 8 (T8) interacts with substrate. Residues 8–9 (TF) and H16 each bind ATP. Substrate-binding residues include K40, T72, and R86. ATP is bound by residues 87 to 89 (GLR), E97, and 122 to 128 (YSFLSSS).

Belongs to the bacterial CoaD family. As to quaternary structure, homohexamer. Requires Mg(2+) as cofactor.

The protein localises to the cytoplasm. The enzyme catalyses (R)-4'-phosphopantetheine + ATP + H(+) = 3'-dephospho-CoA + diphosphate. The protein operates within cofactor biosynthesis; coenzyme A biosynthesis; CoA from (R)-pantothenate: step 4/5. In terms of biological role, reversibly transfers an adenylyl group from ATP to 4'-phosphopantetheine, yielding dephospho-CoA (dPCoA) and pyrophosphate. The polypeptide is Phosphopantetheine adenylyltransferase (Prochlorococcus marinus (strain MIT 9301)).